Here is a 621-residue protein sequence, read N- to C-terminus: MGRAVGIDLGTTNSCIATLEGGEPTVIVNAEGARTTPSVVAFSKSGEILVGEVAKRQAVTNVDRTISSVKRHMGTDWTVDIDGKEWTPQEISAQILMKLKRDAEAYLGEPVTDAVITCPAYFNDAQRQATKDAGTIAGLNVLRIINEPTAAALAYGLEKSKEDERILVFDLGGGTFDVSLLEIGKDDDGFSTIQVQATSGDNHLGGDDWDQRIIDWLVGEVKNKYGVDLSKDKIALQRLKEAAEQAKKELSSSMSTTINMQYLAMTPDGTPVHLDETLTRAHFEEMTKDLLDRCRTPFNNVLADAGISVSQIDHVILVGGSTRMPAVKELVKELDGGKEANQSVNPDEVVAIGAAVQSGVIKGDRKDVLLIDVTPLSLGIETKGGIMTKLIERNTAIPAKRSEIFSTAEDNQPSVLIQVYQGEREFARDNKPLGTFELTGIAPAPRGVPQIEVTFDIDANGIVHVSAKDKGTGKEQSMTITGGSALPKEEIDQMIKDAEAHEADDKKRKEDAETRNNAENFAYQTEKLVNDNKDKLSDDVAKSVTDAINELKDALKGDDIEKIKAAQEKLMTEAQKIGQALYAQQGAEGAAGAADSGSANNGGDDDVVDAEVVDDDDKDNK.

Thr175 carries the post-translational modification Phosphothreonine; by autocatalysis. Residues 499-516 (EAHEADDKKRKEDAETRN) are compositionally biased toward basic and acidic residues. Disordered regions lie at residues 499–520 (EAHE…NAEN) and 583–621 (AQQG…KDNK). Low complexity predominate over residues 583 to 602 (AQQGAEGAAGAADSGSANNG). The segment covering 603 to 621 (GDDDVVDAEVVDDDDKDNK) has biased composition (acidic residues).

Belongs to the heat shock protein 70 family.

Functionally, acts as a chaperone. The chain is Chaperone protein DnaK from Bifidobacterium animalis subsp. lactis (strain AD011).